Consider the following 293-residue polypeptide: MHKDIATPIRTQEILKKYGFSFKKSLGQNFLIDPNILRNIVSHAKLTENSGAIEVGPGIGALTEHLARSAKKVVSFEIDQRLLPVLEDTLSPYNNVSIVHSDILKADVAKVIAEEMPGIEDIMVVANLPYYVTTPILMKLLNDRLPIRGFVVMMQKEVADRITAKPGTKEYGSLSIAIQYYVKADIAMTVPKTVFMPQPNVDSAVIRLIKHDEPPVKVINEDFLFVVTRASFVQRRKTIYNNLQAGLPNGKTQKDFILEALAAANIEPTRRGETLTIQEFGKLADALYPVFAK.

Positions 29, 31, 56, 77, 102, and 127 each coordinate S-adenosyl-L-methionine.

Belongs to the class I-like SAM-binding methyltransferase superfamily. rRNA adenine N(6)-methyltransferase family. RsmA subfamily.

Its subcellular location is the cytoplasm. The catalysed reaction is adenosine(1518)/adenosine(1519) in 16S rRNA + 4 S-adenosyl-L-methionine = N(6)-dimethyladenosine(1518)/N(6)-dimethyladenosine(1519) in 16S rRNA + 4 S-adenosyl-L-homocysteine + 4 H(+). Its function is as follows. Specifically dimethylates two adjacent adenosines (A1518 and A1519) in the loop of a conserved hairpin near the 3'-end of 16S rRNA in the 30S particle. May play a critical role in biogenesis of 30S subunits. The polypeptide is Ribosomal RNA small subunit methyltransferase A (Lysinibacillus sphaericus (strain C3-41)).